The following is a 495-amino-acid chain: Ribose import ATP-binding protein RbsA 3 (495 aa).

ABC transporter domains lie at 5–240 (VRLR…VGRE) and 250–492 (AEIG…TGVK). ATP is bound at residue 37–44 (GENGAGKS).

The protein belongs to the ABC transporter superfamily. Ribose importer (TC 3.A.1.2.1) family. The complex is composed of an ATP-binding protein (RbsA), two transmembrane proteins (RbsC) and a solute-binding protein (RbsB).

It localises to the cell membrane. The catalysed reaction is D-ribose(out) + ATP + H2O = D-ribose(in) + ADP + phosphate + H(+). In terms of biological role, part of the ABC transporter complex RbsABC involved in ribose import. Responsible for energy coupling to the transport system. In Rubrobacter xylanophilus (strain DSM 9941 / JCM 11954 / NBRC 16129 / PRD-1), this protein is Ribose import ATP-binding protein RbsA 3.